The following is a 691-amino-acid chain: Glycine--tRNA ligase beta subunit (691 aa).

This sequence belongs to the class-II aminoacyl-tRNA synthetase family. Tetramer of two alpha and two beta subunits.

The protein localises to the cytoplasm. It carries out the reaction tRNA(Gly) + glycine + ATP = glycyl-tRNA(Gly) + AMP + diphosphate. This chain is Glycine--tRNA ligase beta subunit, found in Limosilactobacillus reuteri (strain DSM 20016) (Lactobacillus reuteri).